We begin with the raw amino-acid sequence, 120 residues long: Small ribosomal subunit protein uS13 (120 aa).

The disordered stretch occupies residues 93-120; that stretch reads RKGLPVRGQTTKNNARTRKGKKKTVGSK. Residues 107–120 are compositionally biased toward basic residues; the sequence is ARTRKGKKKTVGSK.

Belongs to the universal ribosomal protein uS13 family. In terms of assembly, part of the 30S ribosomal subunit. Forms a loose heterodimer with protein S19. Forms two bridges to the 50S subunit in the 70S ribosome.

Functionally, located at the top of the head of the 30S subunit, it contacts several helices of the 16S rRNA. In the 70S ribosome it contacts the 23S rRNA (bridge B1a) and protein L5 of the 50S subunit (bridge B1b), connecting the 2 subunits; these bridges are implicated in subunit movement. Contacts the tRNAs in the A and P-sites. The polypeptide is Small ribosomal subunit protein uS13 (Helicobacter acinonychis (strain Sheeba)).